The chain runs to 265 residues: Mlc titration factor A (265 aa).

4 residues coordinate Zn(2+): His111, His148, His152, and Glu211.

This sequence belongs to the MtfA family. As to quaternary structure, interacts with Mlc. It depends on Zn(2+) as a cofactor.

The protein localises to the cytoplasm. Its function is as follows. Involved in the modulation of the activity of the glucose-phosphotransferase system (glucose-PTS). Interacts with the transcriptional repressor Mlc, preventing its interaction with DNA and leading to the modulation of expression of genes regulated by Mlc, including ptsG, which encodes the PTS system glucose-specific EIICB component. Shows zinc-dependent metallopeptidase activity. This is Mlc titration factor A from Salmonella typhi.